The following is a 426-amino-acid chain: Tektin-1 (426 aa).

3 coiled-coil regions span residues Lys21–Leu84, Leu268–Glu307, and Lys339–Ile383. A disordered region spans residues Ser396 to Asp426.

Belongs to the tektin family. In terms of assembly, microtubule inner protein component of sperm flagellar doublet microtubules. Ubiquitinated, leading to its degradation. Deubiquitinated by USP16, promoting its stability.

The protein localises to the cytoplasm. The protein resides in the cytoskeleton. Its subcellular location is the cilium axoneme. It localises to the flagellum axoneme. Microtubule inner protein (MIP) part of the dynein-decorated doublet microtubules (DMTs) in cilia and flagellar axoneme. Forms filamentous polymers in the walls of ciliary and flagellar microtubules. This Canis lupus familiaris (Dog) protein is Tektin-1 (TEKT1).